The following is a 426-amino-acid chain: Glutamate-1-semialdehyde 2,1-aminomutase (426 aa).

Lys265 carries the post-translational modification N6-(pyridoxal phosphate)lysine.

It belongs to the class-III pyridoxal-phosphate-dependent aminotransferase family. HemL subfamily. As to quaternary structure, homodimer. Pyridoxal 5'-phosphate serves as cofactor.

It is found in the cytoplasm. The enzyme catalyses (S)-4-amino-5-oxopentanoate = 5-aminolevulinate. It participates in porphyrin-containing compound metabolism; protoporphyrin-IX biosynthesis; 5-aminolevulinate from L-glutamyl-tRNA(Glu): step 2/2. This Halorhodospira halophila (strain DSM 244 / SL1) (Ectothiorhodospira halophila (strain DSM 244 / SL1)) protein is Glutamate-1-semialdehyde 2,1-aminomutase.